Consider the following 648-residue polypeptide: Replication restart protein PriA (648 aa).

The Helicase ATP-binding domain occupies 131–297; that stretch reads TIFNESNKPT…KTHKYQLVTL (167 aa). ATP is bound at residue 144–151; it reads GVTGSGKT. The short motif at 240 to 243 is the DEAH box element; sequence DEEH. Cysteine 358, cysteine 361, cysteine 367, cysteine 370, cysteine 385, cysteine 388, cysteine 398, and cysteine 401 together coordinate Zn(2+). Residues 393–548 enclose the Helicase C-terminal domain; sequence KIFSSCPECL…SFFTNELEIR (156 aa).

This sequence belongs to the helicase family. PriA subfamily. As to quaternary structure, component of the replication restart primosome. Zn(2+) is required as a cofactor.

It carries out the reaction Couples ATP hydrolysis with the unwinding of duplex DNA by translocating in the 3'-5' direction.. The enzyme catalyses ATP + H2O = ADP + phosphate + H(+). Initiates the restart of stalled replication forks, which reloads the replicative helicase on sites other than the origin of replication. Recognizes and binds to abandoned replication forks and remodels them to uncover a helicase loading site. Promotes assembly of the primosome at these replication forks. This is Replication restart protein PriA from Rickettsia typhi (strain ATCC VR-144 / Wilmington).